Consider the following 809-residue polypeptide: Trimethylamine-N-oxide reductase 2 (809 aa).

The tat-type signal signal peptide spans 1–31; it reads MTLTRREFIKHSGIAAGTLVVTSAAPLPAWA. Residue Ser-176 participates in Mo-bis(molybdopterin guanine dinucleotide) binding.

Belongs to the prokaryotic molybdopterin-containing oxidoreductase family. The cofactor is Mo-bis(molybdopterin guanine dinucleotide). Post-translationally, predicted to be exported by the Tat system. The position of the signal peptide cleavage has not been experimentally proven.

Its subcellular location is the periplasm. The catalysed reaction is trimethylamine + 2 Fe(III)-[cytochrome c] + H2O = trimethylamine N-oxide + 2 Fe(II)-[cytochrome c] + 3 H(+). In terms of biological role, reduces trimethylamine-N-oxide (TMAO) into trimethylamine; an anaerobic reaction coupled to energy-yielding reactions. Can also reduce other N- and S-oxide compounds such as 4-methylmorpholine-N-oxide and biotin sulfoxide (BSO), but with a lower catalytic efficiency. The polypeptide is Trimethylamine-N-oxide reductase 2 (torZ) (Escherichia coli O6:H1 (strain CFT073 / ATCC 700928 / UPEC)).